A 305-amino-acid polypeptide reads, in one-letter code: Homoserine O-succinyltransferase (305 aa).

Catalysis depends on Cys-142, which acts as the Acyl-thioester intermediate. Residues Lys-163 and Ser-192 each contribute to the substrate site. His-235 acts as the Proton acceptor in catalysis. The active site involves Glu-237. Arg-249 contributes to the substrate binding site.

Belongs to the MetA family.

The protein localises to the cytoplasm. The enzyme catalyses L-homoserine + succinyl-CoA = O-succinyl-L-homoserine + CoA. It participates in amino-acid biosynthesis; L-methionine biosynthesis via de novo pathway; O-succinyl-L-homoserine from L-homoserine: step 1/1. Its function is as follows. Transfers a succinyl group from succinyl-CoA to L-homoserine, forming succinyl-L-homoserine. In Psychromonas ingrahamii (strain DSM 17664 / CCUG 51855 / 37), this protein is Homoserine O-succinyltransferase.